Here is a 324-residue protein sequence, read N- to C-terminus: NADH-ubiquinone oxidoreductase chain 1 (324 aa).

9 helical membrane passes run 9–29 (ILNP…LTLL), 43–63 (PNIV…KLFI), 75–95 (ILFI…WAPL), 106–126 (LAIL…LGSG), 146–166 (ISYE…TGGF), 177–197 (SIWL…STLA), 228–250 (LFFL…LFLG), 259–279 (ELTT…FLWV), and 299–319 (FLPL…TFAG).

Belongs to the complex I subunit 1 family.

Its subcellular location is the mitochondrion inner membrane. It catalyses the reaction a ubiquinone + NADH + 5 H(+)(in) = a ubiquinol + NAD(+) + 4 H(+)(out). In terms of biological role, core subunit of the mitochondrial membrane respiratory chain NADH dehydrogenase (Complex I) that is believed to belong to the minimal assembly required for catalysis. Complex I functions in the transfer of electrons from NADH to the respiratory chain. The immediate electron acceptor for the enzyme is believed to be ubiquinone. This Tetraodon nigroviridis (Spotted green pufferfish) protein is NADH-ubiquinone oxidoreductase chain 1 (MT-ND1).